Consider the following 121-residue polypeptide: Large ribosomal subunit protein bL20 (121 aa).

The protein belongs to the bacterial ribosomal protein bL20 family.

Binds directly to 23S ribosomal RNA and is necessary for the in vitro assembly process of the 50S ribosomal subunit. It is not involved in the protein synthesizing functions of that subunit. In Methylorubrum extorquens (strain PA1) (Methylobacterium extorquens), this protein is Large ribosomal subunit protein bL20.